A 244-amino-acid chain; its full sequence is Protein DMP9 (244 aa).

Positions 1–56 (MEKTEESVGIRVYTATPPQKPSPSPPSRSPKPVLISSLPSLPSGAAAGGGRGRKRR) are disordered. The span at 18 to 29 (PQKPSPSPPSRS) shows a compositional bias: pro residues. The span at 30–45 (PKPVLISSLPSLPSGA) shows a compositional bias: low complexity. The next 4 membrane-spanning stretches (helical) occupy residues 71 to 91 (MLVN…LPSI), 99 to 119 (GINT…CFFF), 173 to 193 (LTVN…AIAF), and 213 to 233 (VMES…LVFP).

It belongs to the plant DMP1 protein family. Restricted to flowers and pollen.

Its subcellular location is the endoplasmic reticulum membrane. It localises to the vacuole membrane. Involved in membrane remodeling. This is Protein DMP9 from Arabidopsis thaliana (Mouse-ear cress).